Here is a 255-residue protein sequence, read N- to C-terminus: 5-oxoprolinase subunit A (255 aa).

This sequence belongs to the LamB/PxpA family. As to quaternary structure, forms a complex composed of PxpA, PxpB and PxpC.

It carries out the reaction 5-oxo-L-proline + ATP + 2 H2O = L-glutamate + ADP + phosphate + H(+). Functionally, catalyzes the cleavage of 5-oxoproline to form L-glutamate coupled to the hydrolysis of ATP to ADP and inorganic phosphate. The chain is 5-oxoprolinase subunit A from Nitrobacter winogradskyi (strain ATCC 25391 / DSM 10237 / CIP 104748 / NCIMB 11846 / Nb-255).